We begin with the raw amino-acid sequence, 241 residues long: MMKIKIIFSYDGSAFLGSASQPHKKGVQDALSGALSHLGIVSPLLMASRTDKGVHASYAVASVGCGDHFVNLEYLQKQLNKFSHPFIHIKKIEKVKDDFEVRFDVKSREYRYIFSHSSYSPFMASYVHFYPKFDLDKANELLGFFVGKKDLKFFCKSGGDNKTTLREIFIARAYAYKDFSIFHFKANGFLRGQIRLSVASVLKVLEGKMSEKELKEQIEAKKQYNHFLAPPNGLYLSRICY.

The active-site Nucleophile is Asp51. Residue Tyr110 participates in substrate binding.

The protein belongs to the tRNA pseudouridine synthase TruA family. As to quaternary structure, homodimer.

The enzyme catalyses uridine(38/39/40) in tRNA = pseudouridine(38/39/40) in tRNA. In terms of biological role, formation of pseudouridine at positions 38, 39 and 40 in the anticodon stem and loop of transfer RNAs. The sequence is that of tRNA pseudouridine synthase A from Campylobacter jejuni subsp. jejuni serotype O:23/36 (strain 81-176).